The chain runs to 1460 residues: Centrosomal protein of 164 kDa (1460 aa).

Residues 1–194 (MAGRPLRIGD…PSQGLKTSAY (194 aa)) form an interaction with ATRIP region. The WW domain maps to 56–89 (APLPGEWKPCQDITGDIYYFNFANGQSMWDHPCD). The disordered stretch occupies residues 107–135 (GAIKKKKKKKEKKDKKDRDPPKSSLALGS). Over residues 109–119 (IKKKKKKKEKK) the composition is skewed to basic residues. At Ser186 the chain carries Phosphoserine; by ATR and ATM. Ser201 is modified (phosphoserine). 3 disordered regions span residues 213-412 (GLGE…HGLD), 440-593 (AQQP…AALK), and 658-719 (EEAR…QKNR). Positions 217-227 (ETNEEDEEESD) are enriched in acidic residues. Basic and acidic residues predominate over residues 256–270 (ESLRTSQPEEKKDVS). The span at 285–296 (SSPGADSSLSSA) shows a compositional bias: low complexity. Basic and acidic residues-rich tracts occupy residues 310–323 (LPEK…EPKI) and 357–367 (EGSRREEAAKE). Low complexity predominate over residues 453–464 (QSSQDELQSKQS). Residues 465–481 (KGLEERLSPPLPHEERA) are compositionally biased toward basic and acidic residues. A compositionally biased stretch (low complexity) spans 514–525 (SAASLSLQLSLQ). A compositionally biased stretch (basic and acidic residues) spans 537–546 (EKGKEQHSQA). Ser566 carries the post-translational modification Phosphoserine. 2 stretches are compositionally biased toward basic and acidic residues: residues 658–668 (EEARMREEESQ) and 686–719 (DQIR…QKNR). The stretch at 1154–1206 (GIKALEDMRKNLEKETRHLDEMKSAMRKGHNLLKKKEEKLNQLESSLWEEASD) forms a coiled coil. Positions 1290–1310 (PPPLLASMPAQLPPRDPKSTP) are disordered. Residues Ser1386, Ser1388, and Ser1443 each carry the phosphoserine modification.

In terms of assembly, interacts (via N-terminus) with ATRIP. Interacts with ATM, ATR and MDC1. Interacts with XPA (via N-terminus) upon UV irradiation. Interacts with CEP83, CCDC92, TTBK2, DVL3, NPHP3 and weakly with NPHP4. Interacts with DZIP1. Phosphorylation at Ser-186 is induced upon DNA-damage caused by treatment with IR irradiation, UV irradiation, hydroxyurea or amphidicolin. Also MDC1-mediated chromatin remodeling is critical for DNA damage-induced phosphorylation. Expressed in several cell lines.

The protein resides in the cytoplasm. Its subcellular location is the cytoskeleton. It localises to the microtubule organizing center. The protein localises to the centrosome. It is found in the centriole. The protein resides in the nucleus. Its function is as follows. Plays a role in microtubule organization and/or maintenance for the formation of primary cilia (PC), a microtubule-based structure that protrudes from the surface of epithelial cells. Plays a critical role in G2/M checkpoint and nuclear divisions. A key player in the DNA damage-activated ATR/ATM signaling cascade since it is required for the proper phosphorylation of H2AX, RPA, CHEK2 and CHEK1. Plays a critical role in chromosome segregation, acting as a mediator required for the maintenance of genomic stability through modulation of MDC1, RPA and CHEK1. The protein is Centrosomal protein of 164 kDa (CEP164) of Homo sapiens (Human).